Here is a 60-residue protein sequence, read N- to C-terminus: Large ribosomal subunit protein bL32 (60 aa).

This sequence belongs to the bacterial ribosomal protein bL32 family.

This Ehrlichia ruminantium (strain Gardel) protein is Large ribosomal subunit protein bL32.